The chain runs to 145 residues: Hydrophobin-like protein 1 (145 aa).

An N-terminal signal peptide occupies residues 1 to 20; sequence MYLLQISISLLLLISTAATA. An N-linked (GlcNAc...) asparagine glycan is attached at Asn36. Intrachain disulfides connect Cys61/Cys121, Cys71/Cys113, Cys72/Cys104, and Cys122/Cys139.

It is found in the secreted. The protein localises to the cell wall. In terms of biological role, aerial growth, conidiation, and dispersal of filamentous fungi in the environment rely upon a capability of their secreting small amphipathic proteins called hydrophobins (HPBs) with low sequence identity. Class I can self-assemble into an outermost layer of rodlet bundles on aerial cell surfaces, conferring cellular hydrophobicity that supports fungal growth, development and dispersal; whereas Class II form highly ordered films at water-air interfaces through intermolecular interactions but contribute nothing to the rodlet structure. In Botryotinia fuckeliana, hydrophobins are not involved in conferring surface hydrophobicity to conidia and aerial hyphae and their function in sclerotia and fruiting bodies remains to be investigated. The protein is Hydrophobin-like protein 1 of Botryotinia fuckeliana (strain B05.10) (Noble rot fungus).